Reading from the N-terminus, the 137-residue chain is MSEVQIVKSFLEELSKTPRNHPDSIPIEKIDETAISITIPAPLVEFQGNLALFEEKKVHVVAKTVRPPIQQASTEINVQSTILELKEVLASQLSTQPSSIRLMYKGKPLVNSRLLDDYVDADSVSEVNLQMFLMNIS.

Residues 58–135 form the Ubiquitin-like domain; it reads VHVVAKTVRP…EVNLQMFLMN (78 aa).

It is found in the cytoplasm. It localises to the nucleus. This is an uncharacterized protein from Schizosaccharomyces pombe (strain 972 / ATCC 24843) (Fission yeast).